The sequence spans 457 residues: ATP-dependent protease ATPase subunit HslU (457 aa).

ATP contacts are provided by residues valine 21, glycine 63–glutamate 68, aspartate 269, glutamate 335, and arginine 407.

The protein belongs to the ClpX chaperone family. HslU subfamily. In terms of assembly, a double ring-shaped homohexamer of HslV is capped on each side by a ring-shaped HslU homohexamer. The assembly of the HslU/HslV complex is dependent on binding of ATP.

It is found in the cytoplasm. Functionally, ATPase subunit of a proteasome-like degradation complex; this subunit has chaperone activity. The binding of ATP and its subsequent hydrolysis by HslU are essential for unfolding of protein substrates subsequently hydrolyzed by HslV. HslU recognizes the N-terminal part of its protein substrates and unfolds these before they are guided to HslV for hydrolysis. The polypeptide is ATP-dependent protease ATPase subunit HslU (Desulfotalea psychrophila (strain LSv54 / DSM 12343)).